An 82-amino-acid polypeptide reads, in one-letter code: Putative membrane protein insertion efficiency factor (82 aa).

It belongs to the UPF0161 family.

The protein localises to the cell inner membrane. Could be involved in insertion of integral membrane proteins into the membrane. This is Putative membrane protein insertion efficiency factor from Francisella tularensis subsp. holarctica (strain LVS).